A 130-amino-acid chain; its full sequence is Small ribosomal subunit protein uS8 (130 aa).

Position 88 is an N6-succinyllysine (Lys-88).

Belongs to the universal ribosomal protein uS8 family. As to quaternary structure, component of the small ribosomal subunit. Part of the small subunit (SSU) processome, composed of more than 70 proteins and the RNA chaperone small nucleolar RNA (snoRNA) U3.

The protein localises to the cytoplasm. It localises to the nucleus. It is found in the nucleolus. In terms of biological role, component of the small ribosomal subunit. The ribosome is a large ribonucleoprotein complex responsible for the synthesis of proteins in the cell. Part of the small subunit (SSU) processome, first precursor of the small eukaryotic ribosomal subunit. During the assembly of the SSU processome in the nucleolus, many ribosome biogenesis factors, an RNA chaperone and ribosomal proteins associate with the nascent pre-rRNA and work in concert to generate RNA folding, modifications, rearrangements and cleavage as well as targeted degradation of pre-ribosomal RNA by the RNA exosome. Required for proper erythropoiesis. The chain is Small ribosomal subunit protein uS8 (Rps15a) from Mus musculus (Mouse).